The chain runs to 367 residues: Splicing factor U2AF-associated protein 2 (367 aa).

A disordered region spans residues 36-104 (YDPNSLKMNK…SKSENSEASP (69 aa)). Basic and acidic residues predominate over residues 61–78 (TEGKESSNGEDRHTKRLY). RRM domains are found at residues 112-193 (VYIQ…KMRV) and 268-329 (LLID…VVEA).

It belongs to the HTATSF1 family. Interacts with the U2AF large and U2AF small subunits.

In terms of biological role, has a role in pre-mRNA splicing. The protein is Splicing factor U2AF-associated protein 2 (uap2) of Schizosaccharomyces pombe (strain 972 / ATCC 24843) (Fission yeast).